Consider the following 441-residue polypeptide: FBD-associated F-box protein At5g18780 (441 aa).

Positions 10 to 56 constitute an F-box domain; that stretch reads EDRISILPEPLLCHILSFLRTKDSVRTSVLSSRWRDLWLWVPRLDLD. The 45-residue stretch at 366–410 folds into the FBD domain; the sequence is LPRCLISSLASVDIESPITDKATELKLVSYLLENSTTLKKLVLRL.

In Arabidopsis thaliana (Mouse-ear cress), this protein is FBD-associated F-box protein At5g18780.